The primary structure comprises 322 residues: 2-oxoglutarate-dependent dioxygenase caaD (322 aa).

One can recognise a Fe2OG dioxygenase domain in the interval 172–279; it reads TGNAAMFLKL…FAVPAFWHGD (108 aa). Residues H200, D202, and H259 each coordinate Fe cation. R269 is a 2-oxoglutarate binding site.

The protein belongs to the iron/ascorbate-dependent oxidoreductase family. Fe(2+) serves as cofactor.

It functions in the pathway secondary metabolite biosynthesis. In terms of biological role, 2-oxoglutarate-dependent dioxygenase; part of the gene cluster that produces the acyltetronic acid derivatives carlosic acid, agglomerin F and carlosic acid methyl ether. CaaD catalyzes the sequential oxidations of the terminal C-10 methyl group of the caaC product to form carboxylic acid which is necessary for the biosynthesis of agglomerin F. The protein is 2-oxoglutarate-dependent dioxygenase caaD of Aspergillus niger (strain ATCC MYA-4892 / CBS 513.88 / FGSC A1513).